Consider the following 177-residue polypeptide: Inorganic pyrophosphatase (177 aa).

Substrate-binding residues include Lys30, Arg44, and Tyr56. Asp66, Asp71, and Asp103 together coordinate Mg(2+). Substrate is bound at residue Tyr142.

Belongs to the PPase family. In terms of assembly, homohexamer. Mg(2+) serves as cofactor.

The protein localises to the cytoplasm. The enzyme catalyses diphosphate + H2O = 2 phosphate + H(+). Functionally, catalyzes the hydrolysis of inorganic pyrophosphate (PPi) forming two phosphate ions. This is Inorganic pyrophosphatase from Mesorhizobium japonicum (strain LMG 29417 / CECT 9101 / MAFF 303099) (Mesorhizobium loti (strain MAFF 303099)).